Reading from the N-terminus, the 138-residue chain is Regulator of ribonuclease activity B (138 aa).

The interval 111 to 138 (WGTYFEDPNGEEGDDDDYVDEDDDGVRH) is disordered. Over residues 118-138 (PNGEEGDDDDYVDEDDDGVRH) the composition is skewed to acidic residues.

It belongs to the RraB family. In terms of assembly, interacts with the C-terminal region of Rne.

Its subcellular location is the cytoplasm. Functionally, globally modulates RNA abundance by binding to RNase E (Rne) and regulating its endonucleolytic activity. Can modulate Rne action in a substrate-dependent manner by altering the composition of the degradosome. This chain is Regulator of ribonuclease activity B, found in Salmonella typhi.